The following is a 224-amino-acid chain: Menaquinol:cytochrome c reductase cytochrome b subunit (224 aa).

Residues 37–57 form a helical membrane-spanning segment; sequence FSAFVYCFGGLTFFVTVIQVL. Tyr-42 is a heme b binding site. Cys-43 contributes to the heme c binding site. 4 residues coordinate heme b: Arg-91, His-94, His-108, and Arg-111. The next 3 helical transmembrane spans lie at 96–116, 126–146, and 195–215; these read WGASLVIVMMFLHTLRVFFQG, WIVGVLIFFVMLGLGFTGYLL, and IHVFFLPAALFGLMAAHFIMI. Heme b-binding residues include His-196 and His-211. Arg-216 and Ile-220 together coordinate heme c. Ser-221 is a binding site for heme b.

The protein belongs to the cytochrome b family. In terms of assembly, the main subunits of the menaquinol:cytochrome c complex are a Rieske-type iron-sulfur protein (QcrA), a cytochrome b (QcrB) and a cytochrome c (QcrC). Requires heme b as cofactor. The cofactor is heme c.

It is found in the cell membrane. Its function is as follows. Component of the menaquinol:cytochrome c reductase complex. This is Menaquinol:cytochrome c reductase cytochrome b subunit from Bacillus subtilis (strain 168).